Consider the following 705-residue polypeptide: Solute carrier family 28 member 3 (705 aa).

The segment covering 1–21 (MSRSDPDPGKNSEPSKSKMSL) has biased composition (basic and acidic residues). The disordered stretch occupies residues 1–96 (MSRSDPDPGK…TEEESEDERQ (96 aa)). Residues 1–119 (MSRSDPDPGK…FCRKHRVILQ (119 aa)) lie on the Cytoplasmic side of the membrane. Over residues 48–63 (APGNSTVRSRVVQSGE) the composition is skewed to polar residues. Basic and acidic residues predominate over residues 65 to 74 (GRAKQDDRQI). A helical membrane pass occupies residues 120 to 140 (HTIWAVLLTGFLALVIAACAL). The Extracellular portion of the chain corresponds to 141-145 (NFHRA). Residues 146 to 166 (LPLFVITLVTIFFVVWDRLMA) traverse the membrane as a helical segment. The Cytoplasmic segment spans residues 167–190 (KYEQRIDDVLSPGKRLLERHWFWL). Residues 191 to 211 (KWVVWCSLILAVILWLALDTA) traverse the membrane as a helical segment. The Extracellular segment spans residues 212–214 (RLG). Residues 215–236 (QQQLISFGGLVMYIVLLFLFSK) form a helical membrane-spanning segment. Residues 237-244 (HPTRVYWR) lie on the Cytoplasmic side of the membrane. Residues 245–264 (PVFWGIGLQFLLGLLILRTR) form a helical membrane-spanning segment. The Extracellular portion of the chain corresponds to 265-301 (PGFVAFDWMGKQVQTFLGYTDAGAQFVFGEKYTDHFF). Residues 302 to 322 (AFKILPIVVFFSTVMSMLYYL) traverse the membrane as a helical segment. Residues 323–346 (GLMQWIIRKVGWLMLVTMGSSPIE) lie on the Cytoplasmic side of the membrane. The segment at residues 347–365 (SVVAAGNIFVGQTESPLLV) is an intramembrane region (helical). The Cytoplasmic portion of the chain corresponds to 366–378 (QPYLPHVTKSELH). Residues 379–401 (TIMTAGFATIAGSVLGAYISFGV) traverse the membrane as a helical segment. Residues 402 to 403 (SS) lie on the Extracellular side of the membrane. A helical membrane pass occupies residues 404–425 (THLLTASVMSAPAALAVAKLFW). At 426-460 (PETEKPKITLKNAMKMENGDSRNLLEAATQGASSS) the chain is on the cytoplasmic side. Residues 461 to 486 (IPLVANIAANLIAFLALLSFVNSALS) form a helical membrane-spanning segment. Topologically, residues 487–524 (WFGSMFDYPQLSFELICSYIFMPFSFMMGVDWQDRFMV) are extracellular. An intramembrane region (helical) is located at residues 525–544 (AKLIGYKTFFNEFVAYEHLS). Over 545-583 (KFINLRKAAGPKFVNGVQQYMSIRSETIATYALCGFANF) the chain is Extracellular. Residues 584–594 (GSLGIVIGGLT) form a helical membrane-spanning segment. At 595–607 (SIAPSRKRDIASG) the chain is on the cytoplasmic side. A helical transmembrane segment spans residues 608–630 (AMRALIAGTIACFMTACIAGMLS). Topologically, residues 631-705 (DTPVAINCHH…LNCGWIPNIP (75 aa)) are extracellular.

The protein belongs to the concentrative nucleoside transporter (CNT) (TC 2.A.41) family. In terms of assembly, homotrimer. As to expression, expressed in kidney; in the proximal tubule, glomerulus and cortical collecting duct.

The protein resides in the cell membrane. The catalysed reaction is thymidine(out) + 2 Na(+)(out) = thymidine(in) + 2 Na(+)(in). It carries out the reaction cytidine(out) + 2 Na(+)(out) = cytidine(in) + 2 Na(+)(in). The enzyme catalyses uridine(out) + 2 Na(+)(out) = uridine(in) + 2 Na(+)(in). It catalyses the reaction adenosine(out) + 2 Na(+)(out) = adenosine(in) + 2 Na(+)(in). The catalysed reaction is guanosine(out) + 2 Na(+)(out) = guanosine(in) + 2 Na(+)(in). It carries out the reaction inosine(out) + 2 Na(+)(out) = inosine(in) + 2 Na(+)(in). Its function is as follows. Sodium-dependent, pyrimidine- and purine-selective. Involved in the homeostasis of endogenous nucleosides. Exhibits the transport characteristics of the nucleoside transport system cib or N3 subtype (N3/cib) (with marked transport of both thymidine and inosine). Employs a 2:1 sodium/nucleoside ratio. Also able to transport gemcitabine, 3'-azido-3'-deoxythymidine (AZT), ribavirin and 3-deazauridine. This chain is Solute carrier family 28 member 3 (Slc28a3), found in Rattus norvegicus (Rat).